We begin with the raw amino-acid sequence, 132 residues long: DNA-directed RNA polymerase subunit omega (132 aa).

A disordered region spans residues 100–119; sequence VSAEEEASHGTAGMSAEELE.

It belongs to the RNA polymerase subunit omega family. As to quaternary structure, the RNAP catalytic core consists of 2 alpha, 1 beta, 1 beta' and 1 omega subunit. When a sigma factor is associated with the core the holoenzyme is formed, which can initiate transcription.

The enzyme catalyses RNA(n) + a ribonucleoside 5'-triphosphate = RNA(n+1) + diphosphate. Its function is as follows. Promotes RNA polymerase assembly. Latches the N- and C-terminal regions of the beta' subunit thereby facilitating its interaction with the beta and alpha subunits. This is DNA-directed RNA polymerase subunit omega from Gluconacetobacter diazotrophicus (strain ATCC 49037 / DSM 5601 / CCUG 37298 / CIP 103539 / LMG 7603 / PAl5).